We begin with the raw amino-acid sequence, 125 residues long: Mitochondrial import inner membrane translocase subunit TIM16 (125 aa).

A J-like region spans residues 58 to 110 (EAQQILNVSKLSPEEVQKNYEHLFKVNDKSVGGSFYLQSKVVRAKERLDEELR). Serine 69 is subject to Phosphoserine.

The protein belongs to the TIM16/PAM16 family. Probable component of the PAM complex at least composed of a mitochondrial HSP70 protein, GRPEL1 or GRPEL2, TIMM44, TIMM16/PAM16 and TIMM14/DNAJC19. Interacts with DNAJC19. Directly interacts with DNAJC15; this interaction counteracts DNAJC15-dependent stimulation of HSPA9 ATPase activity. Associates with the TIM23 complex. Expressed in trabecular bone and cartilage and by differentiated chondrocytes localized in the hypertrophic zone and by osteoblasts at early developmental stages.

Its subcellular location is the mitochondrion inner membrane. In terms of biological role, regulates ATP-dependent protein translocation into the mitochondrial matrix. Inhibits DNAJC19 stimulation of HSPA9/Mortalin ATPase activity. The polypeptide is Mitochondrial import inner membrane translocase subunit TIM16 (Mus musculus (Mouse)).